The chain runs to 375 residues: uncharacterized protein (375 aa).

Belongs to the IMPDH/GMPR family.

This is an uncharacterized protein from Mycobacterium tuberculosis (strain CDC 1551 / Oshkosh).